Consider the following 179-residue polypeptide: MSLKQRYRETIQGKLLTELSFSNIHEVPKVTKITVNRGLGEAAQNAKFLEASITELSNITGQKVLVTRAKKAIAGFKIRQGMPIGVAVTLRGDRMYSFLERLINLALPRIRDFRGVSPKSFDGRGNYTLGVKEQIIFPEISYDKIDAIRGMDITIVTNARNDEEGRALLREMGMPFRSN.

This sequence belongs to the universal ribosomal protein uL5 family. Part of the 50S ribosomal subunit; contacts the 5S rRNA.

The protein localises to the plastid. Its subcellular location is the organellar chromatophore. Functionally, binds 5S rRNA, forms part of the central protuberance of the 50S subunit. The protein is Large ribosomal subunit protein uL5c (rpl5) of Paulinella chromatophora.